Consider the following 553-residue polypeptide: MSSTTAIRLAARPSSWRGTGALSSGRPLSQFASLPRRSINPSISGMRQGTLRLSIHDGRLFFSTQPPKDTPENMNNKETGSSNVIFMPPPPPAQTEAPSSGSAKEDTTDATNKSETETPTAASESETSKSSESDVSSASTSDSANSSETTTTTSETTPENGNNDTAQPELPSRTEAHRARLSARFSTIMDNFQTRLLTATQTLNDLTGYSAIEQIKRKNAELEVAHGQAQSRLRDARHNYKSLTMHRASTQREVTTLLARKDTWNPLDLERFTSLYRLDHELEAQVAQAAQELTEAETEESRLSADLNAGILKRYHEEQIWSDRIRRQSTWGTWGLMGVNVLLFLVLQFVAEPWRRKRLMKGIAENEKGVIDEVRHELGQVRQALEASGLRETAHLARLMEQEREIQALASTSSSSGDPQGGGGRTEGEVEMDIGAEFMAAAAEEAAEEAATAQQQQQQQQQQQQQQHHQTPETQEEPQQPPLTWKQTAQKWQQTLSDPQQIKAAVVDLYSDRRIDLKMRDVSLLALESAATGAAVVASVAFFVLRSSGSGKA.

Residues 61 to 174 (FFSTQPPKDT…TAQPELPSRT (114 aa)) form a disordered region. Residues 62-84 (FSTQPPKDTPENMNNKETGSSNV) show a composition bias toward polar residues. Residues 103 to 116 (AKEDTTDATNKSET) are compositionally biased toward basic and acidic residues. Residues 133–160 (SDVSSASTSDSANSSETTTTTSETTPEN) show a composition bias toward low complexity. 2 coiled-coil regions span residues 210–241 (SAIEQIKRKNAELEVAHGQAQSRLRDARHNYK) and 277–309 (RLDHELEAQVAQAAQELTEAETEESRLSADLNA). The chain crosses the membrane as a helical span at residues 331-351 (WGTWGLMGVNVLLFLVLQFVA). Residues 352-523 (EPWRRKRLMK…RIDLKMRDVS (172 aa)) lie on the Mitochondrial intermembrane side of the membrane. Disordered stretches follow at residues 408–428 (ALASTSSSSGDPQGGGGRTEG) and 443–497 (AEEA…QTLS). Composition is skewed to low complexity over residues 443–473 (AEEAAEEAATAQQQQQQQQQQQQQQHHQTPE) and 484–495 (TWKQTAQKWQQT). A helical membrane pass occupies residues 524–544 (LLALESAATGAAVVASVAFFV). Residues 545-553 (LRSSGSGKA) are Mitochondrial matrix-facing.

It belongs to the SHE9 family. As to quaternary structure, homooligomer.

It is found in the mitochondrion inner membrane. In terms of biological role, required for the maintenance of the structure of the mitochondrial inner membrane. Involved in mitochondrial morphology. Causes growth arrest when highly overexpressed. This is Sensitive to high expression protein 9 homolog, mitochondrial (she-9) from Neurospora crassa (strain ATCC 24698 / 74-OR23-1A / CBS 708.71 / DSM 1257 / FGSC 987).